We begin with the raw amino-acid sequence, 439 residues long: Proline--tRNA ligase (439 aa).

Belongs to the class-II aminoacyl-tRNA synthetase family. ProS type 2 subfamily. Homodimer.

It localises to the cytoplasm. The catalysed reaction is tRNA(Pro) + L-proline + ATP = L-prolyl-tRNA(Pro) + AMP + diphosphate. Its function is as follows. Catalyzes the attachment of proline to tRNA(Pro) in a two-step reaction: proline is first activated by ATP to form Pro-AMP and then transferred to the acceptor end of tRNA(Pro). The polypeptide is Proline--tRNA ligase (Hyphomonas neptunium (strain ATCC 15444)).